The chain runs to 337 residues: Mitochondrial amidoxime-reducing component 1 (337 aa).

Gly2 carries the N-myristoyl glycine lipid modification. Residues 2–20 (GAAGSSALARFVLLAQSRP) are Mitochondrial matrix-facing. The chain crosses the membrane as a helical; Signal-anchor for type II membrane protein span at residues 21–40 (GWLGVAALGLTAVALGAVAW). Over 41 to 337 (RRAWPTRRRR…VGDPVYLLGQ (297 aa)) the chain is Cytoplasmic. Residues Lys67, Ser68, and Arg92 each coordinate Mo-molybdopterin. The tract at residues 93–183 (FWLVINQEGN…KSQPYRLVHF (91 aa)) is MOSC N-terminal region. The MOSC domain maps to 187 to 335 (MRPRRPHQIA…IKVGDPVYLL (149 aa)). Mo-molybdopterin contacts are provided by Thr210, Ser211, Arg238, Asn240, Ser271, Arg272, Cys273, and Tyr317.

In terms of assembly, component of a complex composed of cytochrome b5, NADH-cytochrome b5 reductase and MTARC1. Mo-molybdopterin serves as cofactor.

It localises to the mitochondrion outer membrane. The protein localises to the membrane. The catalysed reaction is N(omega)-hydroxy-L-arginine + 2 Fe(II)-[cytochrome b5] + 2 H(+) = L-arginine + 2 Fe(III)-[cytochrome b5] + H2O. In terms of biological role, catalyzes the reduction of N-oxygenated molecules, acting as a counterpart of cytochrome P450 and flavin-containing monooxygenases in metabolic cycles. As a component of prodrug-converting system, reduces a multitude of N-hydroxylated prodrugs particularly amidoximes, leading to increased drug bioavailability. May be involved in mitochondrial N(omega)-hydroxy-L-arginine (NOHA) reduction, regulating endogenous nitric oxide levels and biosynthesis. Postulated to cleave the N-OH bond of N-hydroxylated substrates in concert with electron transfer from NADH to cytochrome b5 reductase then to cytochrome b5, the ultimate electron donor that primes the active site for substrate reduction. In Homo sapiens (Human), this protein is Mitochondrial amidoxime-reducing component 1.